A 660-amino-acid chain; its full sequence is Polyadenylate-binding protein 3 (660 aa).

4 RRM domains span residues 49-126 (SSLY…LSNR), 136-213 (GNIF…HFIR), 229-306 (TNVY…RAQK), and 332-409 (ANLY…LAQR). In terms of domain architecture, PABC spans 571 to 648 (PISKLTSSLA…ALDVLRLSVD (78 aa)).

It belongs to the polyadenylate-binding protein type-1 family. As to expression, expressed predominantly in immature flowers. Detected in tapetum and pollen. Strongly expressed in immatures siliques.

It localises to the cytoplasm. It is found in the nucleus. In terms of biological role, binds the poly(A) tail of mRNA. Appears to be an important mediator of the multiple roles of the poly(A) tail in mRNA biogenesis, stability and translation. In the cytoplasm, affects both translation and mRNA decay. Inhibits the polyadenylated RNA degradation by the Rrp41p 3'--&gt;5' exonuclease in vitro. Binds with the 5'UTRs of PAB2, PAB3 and with a lower affinity with the 5'UTR of PAB5. The protein is Polyadenylate-binding protein 3 (PAB3) of Arabidopsis thaliana (Mouse-ear cress).